Here is a 211-residue protein sequence, read N- to C-terminus: Large ribosomal subunit protein uL3 (211 aa).

Residue Gln150 is modified to N5-methylglutamine.

Belongs to the universal ribosomal protein uL3 family. In terms of assembly, part of the 50S ribosomal subunit. Forms a cluster with proteins L14 and L19. Post-translationally, methylated by PrmB.

Functionally, one of the primary rRNA binding proteins, it binds directly near the 3'-end of the 23S rRNA, where it nucleates assembly of the 50S subunit. The chain is Large ribosomal subunit protein uL3 from Pseudomonas savastanoi pv. phaseolicola (strain 1448A / Race 6) (Pseudomonas syringae pv. phaseolicola (strain 1448A / Race 6)).